Consider the following 494-residue polypeptide: Putative myristoylated protein 006R (494 aa).

The N-myristoyl glycine; by host moiety is linked to residue Gly-2. The next 3 helical transmembrane spans lie at 193-213, 214-234, and 465-485; these read VAALVAIVLGVPVVSVIGGIA, VAGRWMFPISILAGAGCLVVW, and WLLYLGVALIIVGIFGSILAF.

This sequence belongs to the IIV-6 118L/458R family.

It is found in the membrane. This is Putative myristoylated protein 006R from Aedes vexans (Inland floodwater mosquito).